The sequence spans 173 residues: Lens fiber membrane intrinsic protein (173 aa).

Residues 1–3 (MYS) are Cytoplasmic-facing. A helical transmembrane segment spans residues 4 to 24 (FMGGGLFCAWVGTILLVVAMA). The Extracellular portion of the chain corresponds to 25-66 (TDHWMQYRLSGSFAHQGLWRYCLGNKCYLQTDSIAYWNATRA). C-linked (Man) tryptophan glycans are attached at residues tryptophan 43 and tryptophan 61. Residue asparagine 62 is glycosylated (N-linked (GlcNAc...) asparagine). Residues 67–87 (FMILSALCAISGIIMGIMAFA) form a helical membrane-spanning segment. The Cytoplasmic segment spans residues 88 to 98 (HQPTFSRISRP). The chain crosses the membrane as a helical span at residues 99–119 (FSAGIMFFSSTLFVVLALAIY). Over 120-140 (TGVTVSFLGRRFGDWRFSWSY) the chain is Extracellular. A helical transmembrane segment spans residues 141-161 (ILGWVAVLMTFFAGIFYMCAY). The Cytoplasmic portion of the chain corresponds to 162–173 (RVHECRRLSTPR). Position 170 is a phosphoserine (serine 170). Residue threonine 171 is modified to Phosphothreonine.

It belongs to the PMP-22/EMP/MP20 family. In terms of assembly, seems to be associated with itself or another lens membrane component via disulfide bonds. In terms of tissue distribution, eye lens specific.

The protein localises to the membrane. Present in the thicker 16-17 nm junctions of mammalian lens fiber cells, where it may contribute to cell junctional organization. Acts as a receptor for calmodulin. May play an important role in both lens development and cataractogenesis. The protein is Lens fiber membrane intrinsic protein (LIM2) of Homo sapiens (Human).